The primary structure comprises 358 residues: Ganglioside-induced differentiation-associated protein 1 (358 aa).

Residues 24–105 (VKLILYHWTH…YLEQTFLDER (82 aa)) enclose the GST N-terminal domain. Residues K50, K172, K173, K188, and K190 each participate in a glycyl lysine isopeptide (Lys-Gly) (interchain with G-Cter in ubiquitin) cross-link. Residues 153 to 309 (PAYATTRIRS…LISAVLPTAF (157 aa)) form the GST C-terminal domain. Position 203 is an N6-acetyllysine; alternate (K203). Residue K203 forms a Glycyl lysine isopeptide (Lys-Gly) (interchain with G-Cter in ubiquitin); alternate linkage. Glycyl lysine isopeptide (Lys-Gly) (interchain with G-Cter in ubiquitin) cross-links involve residues K206, K207, and K214. 2 consecutive transmembrane segments (helical) span residues 292–312 (VLGH…FRVA) and 320–340 (LGTT…FMLF). The segment at 320 to 358 (LGTTLVVGLLAGVGYFAFMLFRKRLGSMILAFRPRPNYF) is required for mitochondrial localization.

This sequence belongs to the GST superfamily. As to quaternary structure, homodimer. Post-translationally, ubiquitinated by PRKN during mitophagy, leading to its degradation and enhancement of mitophagy. Deubiquitinated by USP30. In terms of tissue distribution, highly expressed in whole brain and spinal cord. Predominant expression in central tissues of the nervous system not only in neurons but also in Schwann cells.

The protein resides in the mitochondrion outer membrane. It localises to the cytoplasm. Functionally, regulates the mitochondrial network by promoting mitochondrial fission. This Homo sapiens (Human) protein is Ganglioside-induced differentiation-associated protein 1 (GDAP1).